We begin with the raw amino-acid sequence, 224 residues long: Orotate phosphoribosyltransferase (224 aa).

Residues Lys-26, 73 to 74, Arg-100, Lys-101, Lys-104, His-106, and 127 to 135 contribute to the 5-phospho-alpha-D-ribose 1-diphosphate site; these read YK and EDVTTAGTS. Orotate-binding residues include Thr-131 and Arg-160.

This sequence belongs to the purine/pyrimidine phosphoribosyltransferase family. PyrE subfamily. In terms of assembly, homodimer. It depends on Mg(2+) as a cofactor.

The enzyme catalyses orotidine 5'-phosphate + diphosphate = orotate + 5-phospho-alpha-D-ribose 1-diphosphate. It participates in pyrimidine metabolism; UMP biosynthesis via de novo pathway; UMP from orotate: step 1/2. Functionally, catalyzes the transfer of a ribosyl phosphate group from 5-phosphoribose 1-diphosphate to orotate, leading to the formation of orotidine monophosphate (OMP). This chain is Orotate phosphoribosyltransferase, found in Clostridium beijerinckii (strain ATCC 51743 / NCIMB 8052) (Clostridium acetobutylicum).